Here is a 610-residue protein sequence, read N- to C-terminus: UvrABC system protein C (610 aa).

The region spanning 16–94 (SQPGVYRMYD…IKLYQPRYNV (79 aa)) is the GIY-YIG domain. The 36-residue stretch at 204-239 (QQVLTQLITRMEEASQQLHFEDAARIRDQIQAVRRV) folds into the UVR domain.

The protein belongs to the UvrC family. Interacts with UvrB in an incision complex.

It is found in the cytoplasm. Functionally, the UvrABC repair system catalyzes the recognition and processing of DNA lesions. UvrC both incises the 5' and 3' sides of the lesion. The N-terminal half is responsible for the 3' incision and the C-terminal half is responsible for the 5' incision. The sequence is that of UvrABC system protein C from Yersinia pseudotuberculosis serotype I (strain IP32953).